A 118-amino-acid chain; its full sequence is uncharacterized protein (118 aa).

Positions 49 to 80 (SKEEHTTSAANLHPRKKKRMPPRRAEKNKAPN) are disordered. Basic residues predominate over residues 61 to 70 (HPRKKKRMPP).

This is an uncharacterized protein from Saccharomyces cerevisiae (strain ATCC 204508 / S288c) (Baker's yeast).